The sequence spans 69 residues: Large ribosomal subunit protein uL29 (69 aa).

Belongs to the universal ribosomal protein uL29 family.

The protein is Large ribosomal subunit protein uL29 of Parasynechococcus marenigrum (strain WH8102).